A 161-amino-acid polypeptide reads, in one-letter code: Cytochrome c-type biogenesis protein CcmE (161 aa).

The Cytoplasmic segment spans residues 1–8 (MNPRRKKR). Residues 9 to 29 (LTLAVALIAGVAAVASLLLYA) traverse the membrane as a helical; Signal-anchor for type II membrane protein segment. The Periplasmic portion of the chain corresponds to 30-161 (LNSNLNLFYT…TYNQKALEDK (132 aa)). 2 residues coordinate heme: histidine 131 and tyrosine 135. The disordered stretch occupies residues 142 to 161 (EAMGQTHEKPTYNQKALEDK). Residues 147 to 161 (THEKPTYNQKALEDK) show a composition bias toward basic and acidic residues.

The protein belongs to the CcmE/CycJ family.

It is found in the cell inner membrane. Its function is as follows. Heme chaperone required for the biogenesis of c-type cytochromes. Transiently binds heme delivered by CcmC and transfers the heme to apo-cytochromes in a process facilitated by CcmF and CcmH. This chain is Cytochrome c-type biogenesis protein CcmE, found in Shewanella frigidimarina (strain NCIMB 400).